The sequence spans 100 residues: MISEERLLKVILAPHISEKSTVNAEKNNTVVFRVAIDATKAEVKAAVAQLFEVEVDSVRTLVNKGKTKRHGARTGRRSDWKKAYVTLAEGADIDFVGGAE.

This sequence belongs to the universal ribosomal protein uL23 family. In terms of assembly, part of the 50S ribosomal subunit. Contacts protein L29, and trigger factor when it is bound to the ribosome.

In terms of biological role, one of the early assembly proteins it binds 23S rRNA. One of the proteins that surrounds the polypeptide exit tunnel on the outside of the ribosome. Forms the main docking site for trigger factor binding to the ribosome. The protein is Large ribosomal subunit protein uL23 of Shewanella piezotolerans (strain WP3 / JCM 13877).